The chain runs to 211 residues: Protein-L-isoaspartate O-methyltransferase (211 aa).

The active site involves Ser-60.

Belongs to the methyltransferase superfamily. L-isoaspartyl/D-aspartyl protein methyltransferase family.

It is found in the cytoplasm. It catalyses the reaction [protein]-L-isoaspartate + S-adenosyl-L-methionine = [protein]-L-isoaspartate alpha-methyl ester + S-adenosyl-L-homocysteine. Its function is as follows. Catalyzes the methyl esterification of L-isoaspartyl residues in peptides and proteins that result from spontaneous decomposition of normal L-aspartyl and L-asparaginyl residues. It plays a role in the repair and/or degradation of damaged proteins. This Pseudomonas syringae pv. syringae (strain B728a) protein is Protein-L-isoaspartate O-methyltransferase.